Reading from the N-terminus, the 572-residue chain is Dihydroxy-acid dehydratase (572 aa).

Position 57 (C57) interacts with [2Fe-2S] cluster. D89 lines the Mg(2+) pocket. C130 is a [2Fe-2S] cluster binding site. Mg(2+)-binding residues include D131 and K132. N6-carboxylysine is present on K132. A [2Fe-2S] cluster-binding site is contributed by C202. E453 contacts Mg(2+). Residue S479 is the Proton acceptor of the active site.

It belongs to the IlvD/Edd family. As to quaternary structure, homodimer. Requires [2Fe-2S] cluster as cofactor. Mg(2+) serves as cofactor.

It catalyses the reaction (2R)-2,3-dihydroxy-3-methylbutanoate = 3-methyl-2-oxobutanoate + H2O. The catalysed reaction is (2R,3R)-2,3-dihydroxy-3-methylpentanoate = (S)-3-methyl-2-oxopentanoate + H2O. Its pathway is amino-acid biosynthesis; L-isoleucine biosynthesis; L-isoleucine from 2-oxobutanoate: step 3/4. The protein operates within amino-acid biosynthesis; L-valine biosynthesis; L-valine from pyruvate: step 3/4. Functions in the biosynthesis of branched-chain amino acids. Catalyzes the dehydration of (2R,3R)-2,3-dihydroxy-3-methylpentanoate (2,3-dihydroxy-3-methylvalerate) into 2-oxo-3-methylpentanoate (2-oxo-3-methylvalerate) and of (2R)-2,3-dihydroxy-3-methylbutanoate (2,3-dihydroxyisovalerate) into 2-oxo-3-methylbutanoate (2-oxoisovalerate), the penultimate precursor to L-isoleucine and L-valine, respectively. This Streptococcus thermophilus (strain CNRZ 1066) protein is Dihydroxy-acid dehydratase.